The following is a 329-amino-acid chain: Acetyl-coenzyme A carboxylase carboxyl transferase subunit alpha (329 aa).

The CoA carboxyltransferase C-terminal domain maps to 40–294; the sequence is QLESLAARRR…RAAIERHLEQ (255 aa).

This sequence belongs to the AccA family. Acetyl-CoA carboxylase is a heterohexamer composed of biotin carboxyl carrier protein (AccB), biotin carboxylase (AccC) and two subunits each of ACCase subunit alpha (AccA) and ACCase subunit beta (AccD).

It is found in the cytoplasm. The enzyme catalyses N(6)-carboxybiotinyl-L-lysyl-[protein] + acetyl-CoA = N(6)-biotinyl-L-lysyl-[protein] + malonyl-CoA. It participates in lipid metabolism; malonyl-CoA biosynthesis; malonyl-CoA from acetyl-CoA: step 1/1. In terms of biological role, component of the acetyl coenzyme A carboxylase (ACC) complex. First, biotin carboxylase catalyzes the carboxylation of biotin on its carrier protein (BCCP) and then the CO(2) group is transferred by the carboxyltransferase to acetyl-CoA to form malonyl-CoA. In Synechococcus sp. (strain CC9605), this protein is Acetyl-coenzyme A carboxylase carboxyl transferase subunit alpha.